Consider the following 87-residue polypeptide: Small ribosomal subunit protein bS20 (87 aa).

It belongs to the bacterial ribosomal protein bS20 family.

Functionally, binds directly to 16S ribosomal RNA. This is Small ribosomal subunit protein bS20 from Alkaliphilus metalliredigens (strain QYMF).